Reading from the N-terminus, the 227-residue chain is 2-C-methyl-D-erythritol 4-phosphate cytidylyltransferase (227 aa).

This sequence belongs to the IspD/TarI cytidylyltransferase family. IspD subfamily.

The catalysed reaction is 2-C-methyl-D-erythritol 4-phosphate + CTP + H(+) = 4-CDP-2-C-methyl-D-erythritol + diphosphate. It functions in the pathway isoprenoid biosynthesis; isopentenyl diphosphate biosynthesis via DXP pathway; isopentenyl diphosphate from 1-deoxy-D-xylulose 5-phosphate: step 2/6. Catalyzes the formation of 4-diphosphocytidyl-2-C-methyl-D-erythritol from CTP and 2-C-methyl-D-erythritol 4-phosphate (MEP). The chain is 2-C-methyl-D-erythritol 4-phosphate cytidylyltransferase from Thermosipho melanesiensis (strain DSM 12029 / CIP 104789 / BI429).